The following is a 46-amino-acid chain: Endochitinase 3 (46 aa).

The tract at residues 1–21 (MTPQGNKPSSHDVITGRWTPS) is disordered.

Belongs to the glycosyl hydrolase 19 family. Chitinase class I subfamily.

The enzyme catalyses Random endo-hydrolysis of N-acetyl-beta-D-glucosaminide (1-&gt;4)-beta-linkages in chitin and chitodextrins.. Its function is as follows. Defense against chitin-containing fungal and bacterial pathogens. The chain is Endochitinase 3 from Arachis hypogaea (Peanut).